The chain runs to 94 residues: NADH-ubiquinone oxidoreductase 10.5 kDa subunit (94 aa).

It belongs to the complex I NDUFA2 subunit family. In terms of assembly, complex I is composed of about 40 different subunits.

The protein localises to the mitochondrion inner membrane. Functionally, accessory subunit of the mitochondrial membrane respiratory chain NADH dehydrogenase (Complex I), that is believed not to be involved in catalysis. Complex I functions in the transfer of electrons from NADH to the respiratory chain. The immediate electron acceptor for the enzyme is believed to be ubiquinone. This Neurospora crassa (strain ATCC 24698 / 74-OR23-1A / CBS 708.71 / DSM 1257 / FGSC 987) protein is NADH-ubiquinone oxidoreductase 10.5 kDa subunit (nuo-10.5).